We begin with the raw amino-acid sequence, 72 residues long: Translation initiation factor IF-1 (72 aa).

Positions 1 to 72 constitute an S1-like domain; that stretch reads MAKEDTLEFP…TKGRINYRFK (72 aa).

It belongs to the IF-1 family. In terms of assembly, component of the 30S ribosomal translation pre-initiation complex which assembles on the 30S ribosome in the order IF-2 and IF-3, IF-1 and N-formylmethionyl-tRNA(fMet); mRNA recruitment can occur at any time during PIC assembly.

The protein localises to the cytoplasm. In terms of biological role, one of the essential components for the initiation of protein synthesis. Stabilizes the binding of IF-2 and IF-3 on the 30S subunit to which N-formylmethionyl-tRNA(fMet) subsequently binds. Helps modulate mRNA selection, yielding the 30S pre-initiation complex (PIC). Upon addition of the 50S ribosomal subunit IF-1, IF-2 and IF-3 are released leaving the mature 70S translation initiation complex. The sequence is that of Translation initiation factor IF-1 from Roseobacter denitrificans (strain ATCC 33942 / OCh 114) (Erythrobacter sp. (strain OCh 114)).